The primary structure comprises 314 residues: Ribosomal RNA small subunit methyltransferase H (314 aa).

Residues 58-60, Asp76, Phe103, Asp119, and Gln126 contribute to the S-adenosyl-L-methionine site; that span reads GGH.

It belongs to the methyltransferase superfamily. RsmH family.

The protein localises to the cytoplasm. It catalyses the reaction cytidine(1402) in 16S rRNA + S-adenosyl-L-methionine = N(4)-methylcytidine(1402) in 16S rRNA + S-adenosyl-L-homocysteine + H(+). Functionally, specifically methylates the N4 position of cytidine in position 1402 (C1402) of 16S rRNA. This chain is Ribosomal RNA small subunit methyltransferase H, found in Gloeobacter violaceus (strain ATCC 29082 / PCC 7421).